The sequence spans 100 residues: Integration host factor subunit alpha (100 aa).

A disordered region spans residues 53–72 (FDLRDKRQRPGRNPKTGEEI).

This sequence belongs to the bacterial histone-like protein family. In terms of assembly, heterodimer of an alpha and a beta chain.

Functionally, this protein is one of the two subunits of integration host factor, a specific DNA-binding protein that functions in genetic recombination as well as in transcriptional and translational control. This is Integration host factor subunit alpha from Pseudomonas entomophila (strain L48).